A 260-amino-acid polypeptide reads, in one-letter code: POLG alternative reading frame (260 aa).

Disordered regions lie at residues 1–50 and 108–219; these read MEPK…LRPR and ARRG…RRGG. 3 stretches are compositionally biased toward low complexity: residues 36–48, 116–154, and 164–186; these read AGSS…LQLR, GRGA…GQPG, and AEPA…EAPG. Residues 104-130 form a required for nucleolar localization region; sequence ANLRARRGDAWRGRGAPQRRAPAEARA. Gly residues-rich tracts occupy residues 187 to 199 and 209 to 219; these read LGLG…VRPR and RGAGPGVRRGG.

As to quaternary structure, interacts with C1QBP; the interaction results in nucleolar localization of C1QBP, probably due to prevention of C1QBP maturation and redirection from mitochondria to nucleoli. Post-translationally, undergoes proteolytic cleavage to produce a secreted C-terminal fragment.

The protein resides in the nucleus. The protein localises to the nucleolus. It localises to the secreted. In Homo sapiens (Human), this protein is POLG alternative reading frame.